Here is a 342-residue protein sequence, read N- to C-terminus: Polygalacturonase inhibitor 3 (342 aa).

A signal peptide spans 1–29; that stretch reads MTQFNIPVTMSSSLSIILVILVSLRTALS. Disulfide bonds link Cys-32–Cys-62 and Cys-63–Cys-72. N-linked (GlcNAc...) asparagine glycosylation occurs at Asn-64. LRR repeat units lie at residues 82–107, 108–132, 133–156, 157–180, 181–205, 206–228, 229–252, 253–275, 276–299, and 300–319; these read NNLD…LPYL, NFLY…LTQL, HYLY…IKTL, VTLD…LPNL, VGIT…SKLF, TSMT…NLNL, AFVD…DKNT, QKIH…SKNL, NGLD…LKFL, and HSLN…GGNL. A glycan (N-linked (GlcNAc...) asparagine) is linked at Asn-141. An N-linked (GlcNAc...) asparagine glycan is attached at Asn-303. 2 cysteine pairs are disulfide-bonded: Cys-310–Cys-332 and Cys-334–Cys-341.

This sequence belongs to the polygalacturonase-inhibiting protein family. Found in suspension-cultured cells and to a lesser extent in hypocotyls, leaves and flowers.

The protein resides in the secreted. Its subcellular location is the cell wall. The protein localises to the membrane. Inhibitor of fungal polygalacturonase. It is an important factor for plant resistance to phytopathogenic fungi. The polypeptide is Polygalacturonase inhibitor 3 (PGIP3) (Phaseolus vulgaris (Kidney bean)).